Here is a 314-residue protein sequence, read N- to C-terminus: tRNA dimethylallyltransferase (314 aa).

16–23 (GPTGVGKT) is an ATP binding site. 18–23 (TGVGKT) is a substrate binding site. The interval 41–44 (DSMQ) is interaction with substrate tRNA.

The protein belongs to the IPP transferase family. Monomer. It depends on Mg(2+) as a cofactor.

It carries out the reaction adenosine(37) in tRNA + dimethylallyl diphosphate = N(6)-dimethylallyladenosine(37) in tRNA + diphosphate. In terms of biological role, catalyzes the transfer of a dimethylallyl group onto the adenine at position 37 in tRNAs that read codons beginning with uridine, leading to the formation of N6-(dimethylallyl)adenosine (i(6)A). This chain is tRNA dimethylallyltransferase, found in Desulfosudis oleivorans (strain DSM 6200 / JCM 39069 / Hxd3) (Desulfococcus oleovorans).